A 347-amino-acid polypeptide reads, in one-letter code: Selenide, water dikinase (347 aa).

Cys-17 is an active-site residue. ATP is bound by residues Lys-20 and 48–50 (TRD). Residue Asp-51 participates in Mg(2+) binding. ATP contacts are provided by residues Asp-68, Asp-91, and 139-141 (GHS). Asp-91 lines the Mg(2+) pocket. Asp-227 lines the Mg(2+) pocket.

This sequence belongs to the selenophosphate synthase 1 family. Class I subfamily. As to quaternary structure, homodimer. It depends on Mg(2+) as a cofactor.

It carries out the reaction hydrogenselenide + ATP + H2O = selenophosphate + AMP + phosphate + 2 H(+). Its function is as follows. Synthesizes selenophosphate from selenide and ATP. The protein is Selenide, water dikinase of Escherichia coli O157:H7.